Here is a 2388-residue protein sequence, read N- to C-terminus: Hybrid signal transduction histidine kinase M (2388 aa).

Disordered stretches follow at residues Met-1–Asn-32, Phe-42–Ser-61, Asn-69–Ile-111, Asn-123–Pro-209, Thr-237–Leu-337, Ser-361–Asn-421, Thr-430–Phe-449, and Ile-486–Glu-542. Residues Asn-69–Lys-82 are compositionally biased toward polar residues. Composition is skewed to low complexity over residues Thr-83–Pro-110, Ser-125–Asn-206, and Ser-242–Gly-288. Residues Gln-293 to Asn-306 are compositionally biased toward polar residues. Over residues His-309 to Ser-322 the composition is skewed to basic residues. Low complexity-rich tracts occupy residues Gln-325–Leu-337, Ser-361–Asn-399, Asn-410–Asn-419, and Asn-432–Phe-449. Pro residues predominate over residues Pro-489–Ser-505. The span at Ser-506 to Asn-541 shows a compositional bias: low complexity. 4 helical membrane-spanning segments follow: residues Thr-550–Val-570, Phe-589–Val-609, Tyr-645–Phe-665, and Asn-679–Pro-699. Positions Asn-732–Glu-888 are disordered. Residues Asn-735–Asp-744 are compositionally biased toward basic and acidic residues. The segment covering Asn-745–Asn-880 has biased composition (low complexity). A run of 3 helical transmembrane segments spans residues Phe-896–Leu-916, Val-953–Val-973, and Cys-1025–Ile-1045. The Histidine kinase domain maps to Arg-1093 to Cys-1499. Residues Pro-1236–His-1257 show a composition bias toward basic residues. A disordered region spans residues Pro-1236–Asn-1410. Positions Asp-1260–Thr-1274 are enriched in acidic residues. Residues Leu-1286 to Gln-1315 are compositionally biased toward basic and acidic residues. The segment covering Glu-1316–Asn-1410 has biased composition (low complexity). A Response regulatory 1 domain is found at Lys-1541 to Pro-1656. Residue Asp-1592 is modified to 4-aspartylphosphate. Disordered stretches follow at residues Ser-1666–Phe-1702, Gly-1960–Asn-2022, Cys-2036–Asn-2121, Gln-2133–Ser-2183, and Asn-2218–Asp-2256. The segment covering Ser-1676–Gly-1696 has biased composition (gly residues). Over residues Thr-1974–Thr-1985 the composition is skewed to low complexity. Polar residues predominate over residues Gln-1986 to Arg-2010. Residues Asp-2054–Ser-2064 are compositionally biased toward low complexity. Residues His-2065 to Asp-2076 are compositionally biased toward basic and acidic residues. 2 stretches are compositionally biased toward low complexity: residues Ser-2078–Asn-2109 and Gln-2133–Pro-2165. Residues Ile-2169–Ser-2183 are compositionally biased toward polar residues. The Response regulatory 2 domain occupies Asn-2262–Val-2383. A 4-aspartylphosphate modification is found at Asp-2313.

In terms of processing, activation probably requires transfer of a phosphate group between a histidine in the kinase core (transmitter) domain and an aspartate of the receiver domain.

It is found in the membrane. It carries out the reaction ATP + protein L-histidine = ADP + protein N-phospho-L-histidine.. Its function is as follows. Acts as a receptor histidine kinase for a signal transduction pathway. This protein undergoes an ATP-dependent autophosphorylation at a conserved histidine residue in the kinase core, and a phosphoryl group is then transferred to a conserved aspartate residue in the receiver domain. The polypeptide is Hybrid signal transduction histidine kinase M (dhkM) (Dictyostelium discoideum (Social amoeba)).